The following is a 248-amino-acid chain: Triosephosphate isomerase (248 aa).

9–11 (NWK) contacts substrate. The active-site Electrophile is His92. Glu164 functions as the Proton acceptor in the catalytic mechanism. Residues Gly170, Ser210, and 231–232 (GG) contribute to the substrate site.

It belongs to the triosephosphate isomerase family. Homodimer.

The protein resides in the cytoplasm. The catalysed reaction is D-glyceraldehyde 3-phosphate = dihydroxyacetone phosphate. Its pathway is carbohydrate biosynthesis; gluconeogenesis. It functions in the pathway carbohydrate degradation; glycolysis; D-glyceraldehyde 3-phosphate from glycerone phosphate: step 1/1. In terms of biological role, involved in the gluconeogenesis. Catalyzes stereospecifically the conversion of dihydroxyacetone phosphate (DHAP) to D-glyceraldehyde-3-phosphate (G3P). This Mycoplasma capricolum subsp. capricolum (strain California kid / ATCC 27343 / NCTC 10154) protein is Triosephosphate isomerase.